A 218-amino-acid chain; its full sequence is Glycoprotein UL1 (218 aa).

The signal sequence occupies residues 1–27 (MGVQCNSKLLLLAVLITIILSSILVQA). The helical transmembrane segment at 178-198 (VATHVGWTATVVIIICVLTYV) threads the bilayer.

It belongs to the RL11 family.

The protein localises to the virion membrane. This is Glycoprotein UL1 (UL1) from Homo sapiens (Human).